The sequence spans 498 residues: Glycerol kinase (498 aa).

Thr12 contributes to the ADP binding site. Residues Thr12, Thr13, and Ser14 each contribute to the ATP site. A sn-glycerol 3-phosphate-binding site is contributed by Thr12. Arg16 lines the ADP pocket. Residues Arg82, Glu83, Tyr134, and Asp243 each coordinate sn-glycerol 3-phosphate. Positions 82, 83, 134, 243, and 244 each coordinate glycerol. ADP contacts are provided by Thr265 and Gly308. Thr265, Gly308, Gln312, and Gly409 together coordinate ATP. Positions 409 and 413 each coordinate ADP.

This sequence belongs to the FGGY kinase family. Homotetramer and homodimer (in equilibrium).

The catalysed reaction is glycerol + ATP = sn-glycerol 3-phosphate + ADP + H(+). It functions in the pathway polyol metabolism; glycerol degradation via glycerol kinase pathway; sn-glycerol 3-phosphate from glycerol: step 1/1. With respect to regulation, activated by phosphorylation and inhibited by fructose 1,6-bisphosphate (FBP). In terms of biological role, key enzyme in the regulation of glycerol uptake and metabolism. Catalyzes the phosphorylation of glycerol to yield sn-glycerol 3-phosphate. The polypeptide is Glycerol kinase (Clostridium botulinum (strain Okra / Type B1)).